Reading from the N-terminus, the 526-residue chain is Probable feruloyl esterase B (526 aa).

The first 18 residues, 1–18 (MARLSLLTLLALGSAALA), serve as a signal peptide directing secretion. Intrachain disulfides connect Cys27-Cys74 and Cys62-Cys113. Asn137 carries N-linked (GlcNAc...) asparagine glycosylation. Disulfide bonds link Cys186–Cys441, Cys255–Cys272, Cys281–Cys291, and Cys503–Cys525. Ser187 serves as the catalytic Acyl-ester intermediate. Asn233 carries an N-linked (GlcNAc...) asparagine glycan. Ca(2+) is bound by residues Asp256, Asp259, Ala261, Asp263, and Ile265. The N-linked (GlcNAc...) asparagine glycan is linked to Asn311. Catalysis depends on charge relay system residues Asp400 and His440. Asn516 is a glycosylation site (N-linked (GlcNAc...) asparagine).

Belongs to the tannase family.

It is found in the secreted. The enzyme catalyses feruloyl-polysaccharide + H2O = ferulate + polysaccharide.. In terms of biological role, involved in degradation of plant cell walls. Hydrolyzes the feruloyl-arabinose ester bond in arabinoxylans as well as the feruloyl-galactose and feruloyl-arabinose ester bonds in pectin. This Aspergillus clavatus (strain ATCC 1007 / CBS 513.65 / DSM 816 / NCTC 3887 / NRRL 1 / QM 1276 / 107) protein is Probable feruloyl esterase B (faeB).